A 96-amino-acid chain; its full sequence is UPF0235 protein Helmi_20270 (96 aa).

The protein belongs to the UPF0235 family.

This is UPF0235 protein Helmi_20270 from Heliobacterium modesticaldum (strain ATCC 51547 / Ice1).